The sequence spans 490 residues: Pup--protein ligase (490 aa).

Residue glutamate 9 participates in Mg(2+) binding. Arginine 53 is a binding site for ATP. Residue tyrosine 55 coordinates Mg(2+). Aspartate 57 (proton acceptor) is an active-site residue. Glutamate 63 is a Mg(2+) binding site. Serine 66 is a binding site for ATP. The tract at residues 160–181 is disordered; that stretch reads KTHPNGGPVPGSTDPASSTGVP. Tryptophan 441 is an ATP binding site.

The protein belongs to the Pup ligase/Pup deamidase family. Pup-conjugating enzyme subfamily.

It carries out the reaction ATP + [prokaryotic ubiquitin-like protein]-L-glutamate + [protein]-L-lysine = ADP + phosphate + N(6)-([prokaryotic ubiquitin-like protein]-gamma-L-glutamyl)-[protein]-L-lysine.. The protein operates within protein degradation; proteasomal Pup-dependent pathway. It participates in protein modification; protein pupylation. In terms of biological role, catalyzes the covalent attachment of the prokaryotic ubiquitin-like protein modifier Pup to the proteasomal substrate proteins, thereby targeting them for proteasomal degradation. This tagging system is termed pupylation. The ligation reaction involves the side-chain carboxylate of the C-terminal glutamate of Pup and the side-chain amino group of a substrate lysine. The chain is Pup--protein ligase from Rothia mucilaginosa (strain DY-18) (Stomatococcus mucilaginosus).